A 282-amino-acid polypeptide reads, in one-letter code: Pantothenate synthetase (282 aa).

Position 30 to 37 (30 to 37) interacts with ATP; sequence MGYLHEGH. His37 acts as the Proton donor in catalysis. Gln61 provides a ligand contact to (R)-pantoate. Gln61 is a beta-alanine binding site. Position 147–150 (147–150) interacts with ATP; that stretch reads GMKD. Gln153 is a (R)-pantoate binding site. ATP contacts are provided by residues Val176 and 184–187; that span reads KSSR.

This sequence belongs to the pantothenate synthetase family. Homodimer.

It is found in the cytoplasm. It carries out the reaction (R)-pantoate + beta-alanine + ATP = (R)-pantothenate + AMP + diphosphate + H(+). Its pathway is cofactor biosynthesis; (R)-pantothenate biosynthesis; (R)-pantothenate from (R)-pantoate and beta-alanine: step 1/1. Catalyzes the condensation of pantoate with beta-alanine in an ATP-dependent reaction via a pantoyl-adenylate intermediate. The sequence is that of Pantothenate synthetase from Bacillus cereus (strain AH187).